The primary structure comprises 413 residues: Cardiolipin synthase B (413 aa).

PLD phosphodiesterase domains lie at 108–135 (IFRR…SAEH) and 285–312 (RRRP…DPLS). Active-site residues include His113, Lys115, Asp120, His290, Lys292, and Asp297. A disordered region spans residues 388–413 (AQVPPPAQPEMETQDRVDPENSGVKP).

It belongs to the phospholipase D family. Cardiolipin synthase subfamily. ClsB sub-subfamily.

It localises to the cell membrane. It carries out the reaction 2 a 1,2-diacyl-sn-glycero-3-phospho-(1'-sn-glycerol) = a cardiolipin + glycerol. Catalyzes the phosphatidyl group transfer from one phosphatidylglycerol molecule to another to form cardiolipin (CL) (diphosphatidylglycerol) and glycerol. The polypeptide is Cardiolipin synthase B (Salmonella typhi).